Here is a 128-residue protein sequence, read N- to C-terminus: Ribonuclease P protein component (128 aa).

This sequence belongs to the RnpA family. In terms of assembly, consists of a catalytic RNA component (M1 or rnpB) and a protein subunit.

The enzyme catalyses Endonucleolytic cleavage of RNA, removing 5'-extranucleotides from tRNA precursor.. In terms of biological role, RNaseP catalyzes the removal of the 5'-leader sequence from pre-tRNA to produce the mature 5'-terminus. It can also cleave other RNA substrates such as 4.5S RNA. The protein component plays an auxiliary but essential role in vivo by binding to the 5'-leader sequence and broadening the substrate specificity of the ribozyme. The sequence is that of Ribonuclease P protein component from Prochlorococcus marinus (strain NATL1A).